A 681-amino-acid chain; its full sequence is Cell cycle checkpoint protein RAD17 (681 aa).

An RAD1-binding motif motif is present at residues Asp17–Asp25. The segment at Val42–Phe61 is disordered. Position 55 is a phosphothreonine (Thr55). Ser71 and Ser86 each carry phosphoserine. Gly137–Thr144 contributes to the ATP binding site. Disordered regions lie at residues Ser344–Arg377 and His606–Thr681. Ser359 carries the post-translational modification Phosphoserine. The interval Leu432–Thr681 is interaction with MCM7. A compositionally biased stretch (polar residues) spans Glu631–Ser662. At Thr633 the chain carries Phosphothreonine; by ATM. Phosphoserine; by ATR and ATM is present on residues Ser646 and Ser656. The segment covering Asp666–Thr681 has biased composition (acidic residues).

This sequence belongs to the rad17/RAD24 family. In terms of assembly, part of a DNA-binding complex containing RFC2, RFC3, RFC4 and RFC5. Interacts with RAD1 and RAD9 within the 9-1-1 (RAD1-RAD9-HUS1) complex. Interacts with RAD9B, POLE, SNU13 and MCM7. DNA damage promotes interaction with ATR or ATM and disrupts interaction with the 9-1-1 (RAD1-RAD9-HUS1) complex. Interacts (when phosphorylated) with NBN; promoting recruitment of the MRN complex to DNA damage sites. Post-translationally, phosphorylation on Ser-646 and Ser-656 is cell cycle-regulated, enhanced by genotoxic stress, and required for activation of checkpoint signaling. Phosphorylation is mediated by ATR upon UV or replication arrest, whereas it may be mediated both by ATR and ATM upon ionizing radiation. Phosphorylation on both sites is required for interaction with RAD1 but dispensable for interaction with RFC3 or RFC4. Phosphorylation at Thr-633 by ATM in response to DNA damage promotes interaction with NBN and recruitment of the MRN complex to DNA damage sites. Overexpressed in various cancer cell lines and in colon carcinoma (at protein level). Isoform 2 and isoform 3 are the most abundant isoforms in non irradiated cells (at protein level). Ubiquitous at low levels. Highly expressed in testis, where it is expressed within the germinal epithelium of the seminiferous tubuli. Weakly expressed in seminomas (testicular tumors).

The protein localises to the nucleus. The protein resides in the chromosome. In terms of biological role, essential for sustained cell growth, maintenance of chromosomal stability, and ATR-dependent checkpoint activation upon DNA damage. Has a weak ATPase activity required for binding to chromatin. Participates in the recruitment of the 9-1-1 (RAD1-RAD9-HUS1) complex and RHNO1 onto chromatin, and in CHEK1 activation. Involved in homologous recombination by mediating recruitment of the MRN complex to DNA damage sites. May also serve as a sensor of DNA replication progression. This chain is Cell cycle checkpoint protein RAD17, found in Homo sapiens (Human).